Consider the following 353-residue polypeptide: UDP-N-acetylglucosamine--N-acetylmuramyl-(pentapeptide) pyrophosphoryl-undecaprenol N-acetylglucosamine transferase (353 aa).

UDP-N-acetyl-alpha-D-glucosamine is bound by residues 10-12, asparagine 124, serine 183, and glutamine 283; that span reads TGG.

Belongs to the glycosyltransferase 28 family. MurG subfamily.

It is found in the cell inner membrane. The enzyme catalyses di-trans,octa-cis-undecaprenyl diphospho-N-acetyl-alpha-D-muramoyl-L-alanyl-D-glutamyl-meso-2,6-diaminopimeloyl-D-alanyl-D-alanine + UDP-N-acetyl-alpha-D-glucosamine = di-trans,octa-cis-undecaprenyl diphospho-[N-acetyl-alpha-D-glucosaminyl-(1-&gt;4)]-N-acetyl-alpha-D-muramoyl-L-alanyl-D-glutamyl-meso-2,6-diaminopimeloyl-D-alanyl-D-alanine + UDP + H(+). It participates in cell wall biogenesis; peptidoglycan biosynthesis. Functionally, cell wall formation. Catalyzes the transfer of a GlcNAc subunit on undecaprenyl-pyrophosphoryl-MurNAc-pentapeptide (lipid intermediate I) to form undecaprenyl-pyrophosphoryl-MurNAc-(pentapeptide)GlcNAc (lipid intermediate II). The chain is UDP-N-acetylglucosamine--N-acetylmuramyl-(pentapeptide) pyrophosphoryl-undecaprenol N-acetylglucosamine transferase from Helicobacter pylori (strain Shi470).